The following is a 194-amino-acid chain: dCTP deaminase, dUMP-forming (194 aa).

Residues 105–110 (RSSMGR), aspartate 123, 131–133 (TLE), glutamine 152, tyrosine 166, lysine 174, and glutamine 178 each bind dCTP. Glutamate 133 acts as the Proton donor/acceptor in catalysis.

This sequence belongs to the dCTP deaminase family. Homotrimer.

It catalyses the reaction dCTP + 2 H2O = dUMP + NH4(+) + diphosphate. The protein operates within pyrimidine metabolism; dUMP biosynthesis; dUMP from dCTP: step 1/1. Bifunctional enzyme that catalyzes both the deamination of dCTP to dUTP and the hydrolysis of dUTP to dUMP without releasing the toxic dUTP intermediate. The polypeptide is dCTP deaminase, dUMP-forming (Methanobrevibacter smithii (strain ATCC 35061 / DSM 861 / OCM 144 / PS)).